Here is a 139-residue protein sequence, read N- to C-terminus: Large ribosomal subunit protein uL16 (139 aa).

The tract at residues 1–21 (MLMPKRVQYRKTQRGRMKGNA) is disordered. The span at 7-17 (VQYRKTQRGRM) shows a compositional bias: basic residues.

This sequence belongs to the universal ribosomal protein uL16 family. As to quaternary structure, part of the 50S ribosomal subunit.

Functionally, binds 23S rRNA and is also seen to make contacts with the A and possibly P site tRNAs. This Chlorobaculum tepidum (strain ATCC 49652 / DSM 12025 / NBRC 103806 / TLS) (Chlorobium tepidum) protein is Large ribosomal subunit protein uL16.